The following is a 466-amino-acid chain: 3-isopropylmalate dehydratase large subunit (466 aa).

Residues Cys-347, Cys-407, and Cys-410 each contribute to the [4Fe-4S] cluster site.

This sequence belongs to the aconitase/IPM isomerase family. LeuC type 1 subfamily. As to quaternary structure, heterodimer of LeuC and LeuD. Requires [4Fe-4S] cluster as cofactor.

It catalyses the reaction (2R,3S)-3-isopropylmalate = (2S)-2-isopropylmalate. The protein operates within amino-acid biosynthesis; L-leucine biosynthesis; L-leucine from 3-methyl-2-oxobutanoate: step 2/4. Its function is as follows. Catalyzes the isomerization between 2-isopropylmalate and 3-isopropylmalate, via the formation of 2-isopropylmaleate. This Shewanella halifaxensis (strain HAW-EB4) protein is 3-isopropylmalate dehydratase large subunit.